The chain runs to 42 residues: MIIYLMSYRICVKRTKGLWSIYMIVLTPSIEVRIHYTEYKQR.

This is an uncharacterized protein from Musa (BBTV).